We begin with the raw amino-acid sequence, 1088 residues long: TBC1 domain family member 31 (1088 aa).

The tract at residues 1–20 (MQTTDLGNKESGKIWHRKPN) is disordered. 7 WD repeats span residues 33–74 (HVDA…LNRN), 75–116 (RFDL…TGAK), 117–157 (ELVS…LDTF), 158–200 (QRKR…SDTL), 201–248 (ACKY…SKQL), 249–296 (FRII…IQTC), and 297–334 (KLVFDIGSHDNGIVTSSVSPNGRYITSVMENGSLNIYS). Residues 356-381 (SKDKDSTGNKSGVSGASQEKVRVSSG) are disordered. Residues 363 to 372 (GNKSGVSGAS) show a composition bias toward polar residues. The region spanning 432-607 (EYPAKYRMFI…RLFDNVFSNH (176 aa)) is the Rab-GAP TBC domain. Coiled-coil stretches lie at residues 736-903 (QQQE…VETD) and 1048-1076 (RGELENRERALISEVRELRQKLATQARRK).

The protein resides in the cytoplasm. It localises to the cytoskeleton. It is found in the microtubule organizing center. Its subcellular location is the centrosome. The protein localises to the centriolar satellite. The protein resides in the cilium basal body. Functionally, molecular adapter which is involved in cilium biogenesis. Part of a functional complex including OFD1 a centriolar protein involved in cilium assembly. Could regulate the cAMP-dependent phosphorylation of OFD1, and its subsequent ubiquitination by PJA2 which ultimately leads to its proteasomal degradation. The chain is TBC1 domain family member 31 from Xenopus tropicalis (Western clawed frog).